The chain runs to 170 residues: Co-chaperone protein HscB homolog (170 aa).

The J domain occupies 5-79; sequence DHFSLFGLPT…RARYLCEQAG (75 aa).

This sequence belongs to the HscB family. As to quaternary structure, interacts with HscA and stimulates its ATPase activity.

Its function is as follows. Co-chaperone involved in the maturation of iron-sulfur cluster-containing proteins. Seems to help targeting proteins to be folded toward HscA. This chain is Co-chaperone protein HscB homolog, found in Bordetella bronchiseptica (strain ATCC BAA-588 / NCTC 13252 / RB50) (Alcaligenes bronchisepticus).